A 78-amino-acid polypeptide reads, in one-letter code: Large ribosomal subunit protein bL28 (78 aa).

It belongs to the bacterial ribosomal protein bL28 family.

This is Large ribosomal subunit protein bL28 (rpmB) from Xylella fastidiosa (strain 9a5c).